A 296-amino-acid chain; its full sequence is Phosphatidylserine decarboxylase proenzyme (296 aa).

Residues D113, H169, and S256 each act as charge relay system; for autoendoproteolytic cleavage activity in the active site. The active-site Schiff-base intermediate with substrate; via pyruvic acid; for decarboxylase activity is S256. Residue S256 is modified to Pyruvic acid (Ser); by autocatalysis.

This sequence belongs to the phosphatidylserine decarboxylase family. PSD-B subfamily. Prokaryotic type II sub-subfamily. As to quaternary structure, heterodimer of a large membrane-associated beta subunit and a small pyruvoyl-containing alpha subunit. Pyruvate serves as cofactor. Is synthesized initially as an inactive proenzyme. Formation of the active enzyme involves a self-maturation process in which the active site pyruvoyl group is generated from an internal serine residue via an autocatalytic post-translational modification. Two non-identical subunits are generated from the proenzyme in this reaction, and the pyruvate is formed at the N-terminus of the alpha chain, which is derived from the carboxyl end of the proenzyme. The autoendoproteolytic cleavage occurs by a canonical serine protease mechanism, in which the side chain hydroxyl group of the serine supplies its oxygen atom to form the C-terminus of the beta chain, while the remainder of the serine residue undergoes an oxidative deamination to produce ammonia and the pyruvoyl prosthetic group on the alpha chain. During this reaction, the Ser that is part of the protease active site of the proenzyme becomes the pyruvoyl prosthetic group, which constitutes an essential element of the active site of the mature decarboxylase.

It localises to the cell membrane. The enzyme catalyses a 1,2-diacyl-sn-glycero-3-phospho-L-serine + H(+) = a 1,2-diacyl-sn-glycero-3-phosphoethanolamine + CO2. The protein operates within phospholipid metabolism; phosphatidylethanolamine biosynthesis; phosphatidylethanolamine from CDP-diacylglycerol: step 2/2. In terms of biological role, catalyzes the formation of phosphatidylethanolamine (PtdEtn) from phosphatidylserine (PtdSer). The polypeptide is Phosphatidylserine decarboxylase proenzyme (Clostridium botulinum (strain Eklund 17B / Type B)).